Consider the following 717-residue polypeptide: Cell division cycle protein 27 homolog A (717 aa).

Over residues 198-208 the composition is skewed to polar residues; that stretch reads TEHIPGENQQD. 3 disordered regions span residues 198 to 217, 282 to 315, and 342 to 374; these read TEHI…QPGD, LSAE…KDSH, and SKEA…SPDR. Over residues 293 to 304 the composition is skewed to basic residues; sequence RRSARIAARKKN. Residues 342–356 show a composition bias toward polar residues; sequence SKEATTSGQSVSDIG. TPR repeat units lie at residues 421–454, 489–522, 524–556, 557–590, 592–624, 625–658, and 659–692; these read HWVL…YPYA, PESW…NERF, YAHT…DTRH, YNAW…NPRS, VIMC…DAKN, PLPK…APQE, and SSVH…SPSP.

It belongs to the APC3/CDC27 family. As to quaternary structure, the APC/C is composed of at least 10 subunits. Interacts with APC2 and APC10.

It is found in the nucleus. The protein operates within protein modification; protein ubiquitination. Functionally, component of the anaphase promoting complex/cyclosome (APC/C), a cell cycle-regulated E3 ubiquitin-protein ligase complex that controls progression through mitosis and the G1 phase of the cell cycle. The APC/C complex controls several key steps in the cell cycle by mediating ubiquitination and subsequent degradation of target proteins such as cyclins. The APC/C complex is required for the female gametophyte development and is involved in several aspect of development by controlling cell division and cell elongation. Involved in the control of endoreduplication. Functionally redundant with CDC27B in the control of gametophyte development. This chain is Cell division cycle protein 27 homolog A (CDC27A), found in Arabidopsis thaliana (Mouse-ear cress).